The following is an 835-amino-acid chain: Protein bicaudal D homolog 1 (835 aa).

The stretch at 1-264 (MAAEEALKTV…YINLSDSHIS (264 aa)) forms a coiled coil. Positions 278 to 297 (EPNNDDKMNGHIHGPLGKLN) are disordered. Positions 320 to 519 (ELNISEIQKL…TFSEELAQLY (200 aa)) form a coiled coil. Disordered stretches follow at residues 545 to 616 (RSGS…LDTS) and 800 to 835 (DHEQ…SAHN). Residues 557-572 (GLLSPRLSRRGVSSPV) show a composition bias toward low complexity. Basic and acidic residues predominate over residues 581–590 (VSKENTETSK). The segment covering 591–604 (EPSPTKTPTISPVI) has biased composition (low complexity). Positions 663–803 (IDKDKEALME…LEDLEFDHEQ (141 aa)) form a coiled coil. An interaction with RAB6A region spans residues 663 to 803 (IDKDKEALME…LEDLEFDHEQ (141 aa)).

This sequence belongs to the BicD family. In terms of assembly, interacts with RAB6A. Interacts (via C-terminus) with RAB6B (GTP-bound); the interaction is direct. Interacts with CLIP-115 and KIFC2. Expressed in the brain, heart and skeletal muscle.

The protein localises to the golgi apparatus. Functionally, regulates coat complex coatomer protein I (COPI)-independent Golgi-endoplasmic reticulum transport by recruiting the dynein-dynactin motor complex. The protein is Protein bicaudal D homolog 1 (Bicd1) of Mus musculus (Mouse).